A 276-amino-acid chain; its full sequence is Aldo-keto reductase Mjls_1919 (276 aa).

The active-site Proton donor is the Y50. Residues L190, I228, K230, S231, V232, R236, S239, and N240 each coordinate NADPH.

This sequence belongs to the aldo/keto reductase family.

In Mycobacterium sp. (strain JLS), this protein is Aldo-keto reductase Mjls_1919.